The chain runs to 140 residues: Large ribosomal subunit protein bL17 (140 aa).

A disordered region spans residues 121-140 (AAKGLDSGPTAEANDDDSEE).

This sequence belongs to the bacterial ribosomal protein bL17 family. In terms of assembly, part of the 50S ribosomal subunit. Contacts protein L32.

The protein is Large ribosomal subunit protein bL17 of Rhodospirillum rubrum (strain ATCC 11170 / ATH 1.1.1 / DSM 467 / LMG 4362 / NCIMB 8255 / S1).